Consider the following 246-residue polypeptide: Probable transcriptional regulatory protein PM0980 (246 aa).

Belongs to the TACO1 family.

It localises to the cytoplasm. This chain is Probable transcriptional regulatory protein PM0980, found in Pasteurella multocida (strain Pm70).